The chain runs to 373 residues: Chaperone protein DnaJ (373 aa).

One can recognise a J domain in the interval 4–69; the sequence is DYYETLSVER…SKRRIYDTYG (66 aa). The CR-type zinc finger occupies 131 to 209; that stretch reads GVSKEVKLSR…CHGEGLVKKT (79 aa). Zn(2+) is bound by residues C144, C147, C161, C164, C183, C186, C197, and C200. 4 CXXCXGXG motif repeats span residues 144-151, 161-168, 183-190, and 197-204; these read CWTCEGTG, CPTCNGRG, CPECEGEG, and CNDCHGEG.

The protein belongs to the DnaJ family. As to quaternary structure, homodimer. Zn(2+) serves as cofactor.

Its subcellular location is the cytoplasm. Its function is as follows. Participates actively in the response to hyperosmotic and heat shock by preventing the aggregation of stress-denatured proteins and by disaggregating proteins, also in an autonomous, DnaK-independent fashion. Unfolded proteins bind initially to DnaJ; upon interaction with the DnaJ-bound protein, DnaK hydrolyzes its bound ATP, resulting in the formation of a stable complex. GrpE releases ADP from DnaK; ATP binding to DnaK triggers the release of the substrate protein, thus completing the reaction cycle. Several rounds of ATP-dependent interactions between DnaJ, DnaK and GrpE are required for fully efficient folding. Also involved, together with DnaK and GrpE, in the DNA replication of plasmids through activation of initiation proteins. In Desulfotalea psychrophila (strain LSv54 / DSM 12343), this protein is Chaperone protein DnaJ.